A 511-amino-acid polypeptide reads, in one-letter code: Peroxisomal N(1)-acetyl-spermine/spermidine oxidase (511 aa).

Methionine 1 is modified (N-acetylmethionine). FAD contacts are provided by residues alanine 24, glutamate 45, arginine 53, and 69 to 70 (HW). Positions 72 and 194 each coordinate substrate. FAD is bound at residue valine 247. Asparagine 320 lines the substrate pocket. FAD-binding positions include glutamate 472 and 481 to 482 (TT). Positions 509–511 (PRL) match the Microbody targeting signal motif.

The protein belongs to the flavin monoamine oxidase family. In terms of assembly, monomer. The cofactor is FAD. As to expression, widely expressed. Not detected in spleen. Expressed at lower level in neoplastic tissues.

It is found in the peroxisome. It localises to the cytoplasm. It carries out the reaction N(1)-acetylspermine + O2 + H2O = 3-acetamidopropanal + spermidine + H2O2. The enzyme catalyses N(1)-acetylspermidine + O2 + H2O = 3-acetamidopropanal + putrescine + H2O2. It catalyses the reaction N(1),N(12)-diacetylspermine + O2 + H2O = 3-acetamidopropanal + N(1)-acetylspermidine + H2O2. It participates in amine and polyamine metabolism; spermine metabolism. Flavoenzyme which catalyzes the oxidation of N(1)-acetylspermine to spermidine and is thus involved in the polyamine back-conversion. Can also oxidize N(1)-acetylspermidine to putrescine. Substrate specificity: N(1)-acetylspermine = N(1)-acetylspermidine &gt; N(1),N(12)-diacylspermine &gt;&gt; spermine. Does not oxidize spermidine. Plays an important role in the regulation of polyamine intracellular concentration and has the potential to act as a determinant of cellular sensitivity to the antitumor polyamine analogs. The polypeptide is Peroxisomal N(1)-acetyl-spermine/spermidine oxidase (PAOX) (Homo sapiens (Human)).